Reading from the N-terminus, the 294-residue chain is Cytidine deaminase (294 aa).

2 consecutive CMP/dCMP-type deaminase domains span residues 48–168 (DEDA…FGPK) and 186–294 (VSGD…VLLG). 89–91 (NME) is a substrate binding site. Zn(2+) is bound at residue His-102. Catalysis depends on Glu-104, which acts as the Proton donor. Zn(2+) is bound by residues Cys-129 and Cys-132.

The protein belongs to the cytidine and deoxycytidylate deaminase family. In terms of assembly, homodimer. Zn(2+) is required as a cofactor.

It catalyses the reaction cytidine + H2O + H(+) = uridine + NH4(+). The catalysed reaction is 2'-deoxycytidine + H2O + H(+) = 2'-deoxyuridine + NH4(+). In terms of biological role, this enzyme scavenges exogenous and endogenous cytidine and 2'-deoxycytidine for UMP synthesis. The polypeptide is Cytidine deaminase (Klebsiella pneumoniae subsp. pneumoniae (strain ATCC 700721 / MGH 78578)).